The sequence spans 100 residues: Small ribosomal subunit protein uS14 (100 aa).

Belongs to the universal ribosomal protein uS14 family. Part of the 30S ribosomal subunit. Contacts proteins S3 and S10.

Its function is as follows. Binds 16S rRNA, required for the assembly of 30S particles and may also be responsible for determining the conformation of the 16S rRNA at the A site. This is Small ribosomal subunit protein uS14 from Rippkaea orientalis (strain PCC 8801 / RF-1) (Cyanothece sp. (strain PCC 8801)).